The chain runs to 565 residues: MSRSLSECIDQGRGLVPADLVLKHGRVFDLVTGELVQTDVAICGDRIVGTFGTYTGRREIDCRGRILVPGFIDTHLHVESSLVTPFEFDRCVTPRGITTAICDPHEIANVCGLEGIRYFLEASAHLVMDLRVQLSSCVPSTHMETAGAALEAKDLAPLLDHPRVIGLAEFMNFPGVLMKDPGCMAKLEAFRGRHIDGHAPLLRGKDLNGYIAAGIRTEHEATTADEALEKLRKGMRVLIREGSVSKDLHALVSILTERHAPYLCLCTDDRNPLDIAEHGHIDHMIRTAIRLGAPPLAVYRAASLSAAEAFGLKDRGLIAPGRRADIAVLDSLEGCHAALVLAGGVVADDAAFSARSGVEPVARASVKVAEIAPEAFRCPGNRAETPVIGILPGKIITEHLTAEIEPVDGDKRPDPARDLARIAVIERHGKTGGRATGFVQGFGMARGAIASTVCHDHHNLAVVGIDYADMALAANRLRALEGGFAVAAGGEILAELALPVGGLMSLRPFEEVRDALVTLREAARSLGVTLEEPFLQLAFLALPVIPHLKITDRGMVDVDRFEILP.

Belongs to the metallo-dependent hydrolases superfamily. Adenine deaminase family. It depends on Mn(2+) as a cofactor.

It carries out the reaction adenine + H2O + H(+) = hypoxanthine + NH4(+). This is Adenine deaminase from Cereibacter sphaeroides (strain KD131 / KCTC 12085) (Rhodobacter sphaeroides).